A 127-amino-acid polypeptide reads, in one-letter code: Arginine decarboxylase proenzyme (127 aa).

Residue Ser72 is the Schiff-base intermediate with substrate; via pyruvic acid of the active site. At Ser72 the chain carries Pyruvic acid (Ser); by autocatalysis. The Proton acceptor; for processing activity role is filled by His77. Catalysis depends on Cys92, which acts as the Proton donor; for catalytic activity.

The protein belongs to the prokaryotic AdoMetDC family. Type 1 subfamily. In terms of assembly, heterooctamer of four alpha and four beta chains arranged as a tetramer of alpha/beta heterodimers. The cofactor is pyruvate. In terms of processing, is synthesized initially as an inactive proenzyme. Formation of the active enzyme involves a self-maturation process in which the active site pyruvoyl group is generated from an internal serine residue via an autocatalytic post-translational modification. Two non-identical subunits are generated from the proenzyme in this reaction, and the pyruvate is formed at the N-terminus of the alpha chain, which is derived from the carboxyl end of the proenzyme. The post-translation cleavage follows an unusual pathway, termed non-hydrolytic serinolysis, in which the side chain hydroxyl group of the serine supplies its oxygen atom to form the C-terminus of the beta chain, while the remainder of the serine residue undergoes an oxidative deamination to produce ammonia and the pyruvoyl group blocking the N-terminus of the alpha chain.

It catalyses the reaction L-arginine + H(+) = agmatine + CO2. The protein operates within amine and polyamine biosynthesis; agmatine biosynthesis; agmatine from L-arginine: step 1/1. In terms of biological role, specifically catalyzes the decarboxylation of L-arginine to agmatine. Has no S-adenosylmethionine decarboxylase (AdoMetDC) activity. The polypeptide is Arginine decarboxylase proenzyme (Staphylothermus marinus (strain ATCC 43588 / DSM 3639 / JCM 9404 / F1)).